Reading from the N-terminus, the 313-residue chain is Ribosomal RNA small subunit methyltransferase H (313 aa).

S-adenosyl-L-methionine-binding positions include Gly-35–His-37, Asp-55, Phe-80, Asp-102, and Gln-109.

Belongs to the methyltransferase superfamily. RsmH family.

The protein resides in the cytoplasm. The catalysed reaction is cytidine(1402) in 16S rRNA + S-adenosyl-L-methionine = N(4)-methylcytidine(1402) in 16S rRNA + S-adenosyl-L-homocysteine + H(+). In terms of biological role, specifically methylates the N4 position of cytidine in position 1402 (C1402) of 16S rRNA. This is Ribosomal RNA small subunit methyltransferase H from Shewanella sp. (strain MR-4).